The sequence spans 271 residues: Solute carrier family 66 member 2 (271 aa).

Transmembrane regions (helical) follow at residues 7 to 27 (GWLL…AMVF), 49 to 69 (FSTH…LFWF), and 72 to 92 (HFES…LLML). The PQ-loop 1 domain maps to 14 to 80 (HQLVSWVAAG…RHFESPLLWQ (67 aa)). Position 110 is a phosphoserine (serine 110). The next 3 membrane-spanning stretches (helical) occupy residues 143 to 163 (FADY…ITYL), 168 to 188 (ALFV…LGVP), and 232 to 252 (VCGL…YAFA). The 67-residue stretch at 149–215 (CVLAFTGVAG…MVLMWTSGDT (67 aa)) folds into the PQ-loop 2 domain.

It localises to the membrane. The protein is Solute carrier family 66 member 2 (Slc66a2) of Rattus norvegicus (Rat).